Reading from the N-terminus, the 264-residue chain is Short chain dehydrogenase/reductase dmxR18 (264 aa).

Positions 24, 70, 97, and 130 each coordinate NADP(+). Active-site proton donor residues include Ser146 and Ser147. NADP(+)-binding residues include Tyr161, Lys165, and Thr196. Tyr161 serves as the catalytic Proton acceptor. Residue Lys165 is the Lowers pKa of active site Tyr of the active site.

This sequence belongs to the short-chain dehydrogenases/reductases (SDR) family.

The enzyme catalyses 3,8,9,10-tetrahydroxy-6-methyl-1,4-dihydroanthracen-1-one + NADPH + H(+) = (3R)-3,8,9,10-tetrahydroxy-6-methyl-1,2,3,4-tetrahydroanthracen-1-one + NADP(+). Its pathway is secondary metabolite biosynthesis. In terms of biological role, short chain dehydrogenase/reductase; part of the gene cluster that mediates the biosynthesis of the dimeric xanthones cryptosporioptides. The pathway begins with the synthesis of atrochrysone thioester by the polyketide synthase dmx-nrPKS. The atrochrysone carboxyl ACP thioesterase dmxR1 then breaks the thioester bond and releases the atrochrysone carboxylic acid from dmx-nrPKS. Atrochrysone carboxylic acid is decarboxylated by the decarboxylase dmxR15, and oxidized by the anthrone oxygenase dmxR16 to yield emodin. Emodin is then reduced to emodin hydroquinone by the oxidoreductase dmxR7. A-ring reduction by the short chain dehydrogenase dmxR18, dehydration by the scytalone dehydratase-like protein dmxR17 and probable spontaneous re-oxidation, results in overall deoxygenation to chrysophanol. Baeyer-Villiger oxidation by the Baeyer-Villiger monooxygenase (BVMO) dmxR6 then yields monodictylactone in equilibrium with monodictyphenone. In the case of the cryptosporioptides biosynthesis, monodictylactone is reduced at C-12 to an alcohol (by the short chain dehydrogenases dmxR12 or dmxR8) and hydroxylated at C-5 by dmxR9, yielding the electron-rich aromatic which could eliminate H(2)O to form the ortho-quinonemethide, followed by tautomerisation to paraquinone and complete the formal reduction to produce the 10-methylgroup. Conjugate addition of C-4a-OH to the resulting paraquinone by the monooxygenase dmxR10 then gives cyclohexadienone, which is then reduced at C-5 by the short chain dehydrogenase dmxR3 to give the dihydroxanthone. The 6,7-epoxide in the cryptosporioptides could be introduced by the cytochrome P450 monooxygenase dmxL3. The highly reducing PKS dmxL2 manufactures butyrate, which is further carboxylated by dmxL1 to form ethylmalonate. It is not yet clear whether the carboxylation occurs while the butyrate is attached to the ACP of dmxL2, but this unusual fungal metabolite could then be esterified to O-5 by the O-acetyltransferase dmxR13. Finally, dimerization performed by dmxR5 gives the observed dimers cryptosporioptides A, B and C as the final products of the pathway. In Cryptosporiopsis sp. (strain 8999), this protein is Short chain dehydrogenase/reductase dmxR18.